Consider the following 129-residue polypeptide: Trefoil factor 2 (129 aa).

An N-terminal signal peptide occupies residues Met1–Ser23. P-type domains follow at residues Cys29–Leu73 and Asp79–Lys122. Disulfide bonds link Cys29-Cys127, Cys31-Cys58, Cys42-Cys57, Cys52-Cys69, Cys81-Cys107, Cys91-Cys106, and Cys101-Cys118.

As to expression, stomach.

The protein localises to the secreted. Functionally, inhibits gastrointestinal motility and gastric acid secretion. Could function as a structural component of gastric mucus, possibly by stabilizing glycoproteins in the mucus gel through interactions with carbohydrate side chains. The chain is Trefoil factor 2 (TFF2) from Homo sapiens (Human).